We begin with the raw amino-acid sequence, 611 residues long: Developmental and secondary metabolism regulator veA (611 aa).

Disordered regions lie at residues 1 to 57 (MNRK…RPVD), 222 to 497 (RRRE…ASFD), and 511 to 611 (LEAS…PGHA). The span at 14–23 (KSSATRTTND) shows a compositional bias: polar residues. The Velvet domain maps to 24 to 216 (GRAITYEMQV…AEQGCRVRIR (193 aa)). Residues 38-43 (QRARAC) carry the Nuclear localization signal motif. Over residues 242–254 (AARARASATPDPS) the composition is skewed to low complexity. A compositionally biased stretch (polar residues) spans 274–290 (SASNASHQSLGSISRRP). A compositionally biased stretch (low complexity) spans 330–340 (YPPNQFVQQQP). Residues 341-361 (PMQPPLPQYQPPNYPAPPPPV) are compositionally biased toward pro residues. Residues 362-377 (TAAQQPQPAQSYYNYP) show a composition bias toward low complexity. Residues 419–434 (RNSQQIPPTSQPTAYT) are compositionally biased toward polar residues. Composition is skewed to low complexity over residues 435 to 452 (QPMQ…QHYQ) and 461 to 471 (QASQHSSYSSM). A PEST region spans residues 455-499 (PPPPPSQASQHSSYSSMDLYNSRPAPIEPHHHGNTPASKASFDLP). Residues 511–533 (LEASSPTSVAPTNAYFSGGQTPI) are compositionally biased toward polar residues.

This sequence belongs to the velvet family. VeA subfamily. In terms of assembly, component of the heterotrimeric velvet complex composed of laeA, veA and velB; VeA acting as a bridging protein between laeA and velB.

The protein resides in the nucleus. It is found in the cytoplasm. In terms of biological role, component of the velvet transcription factor complex that controls sexual/asexual developmental ratio in response to light, promoting sexual development in the darkness while stimulating asexual sporulation under illumination. The velvet complex hat acts as a global regulator for secondary metabolite gene expression. Controls the expression of the dothistromin gene cluster. Regulates hyphal growth and pigment formation. Acts as a positive regulator of virulence. In Dothistroma septosporum (strain NZE10 / CBS 128990) (Red band needle blight fungus), this protein is Developmental and secondary metabolism regulator veA.